A 222-amino-acid chain; its full sequence is Voltage-dependent calcium channel gamma-1 subunit (222 aa).

Topologically, residues 1-10 (MSPTEAPKVR) are cytoplasmic. A helical membrane pass occupies residues 11–29 (VTLFCILVGIVLAMTAVVS). At 30–108 (DHWAVLSPHM…TQKEYSISAA (79 aa)) the chain is on the extracellular side. Asn-43 and Asn-79 each carry an N-linked (GlcNAc...) asparagine glycan. Cys-57 and Cys-80 are joined by a disulfide. The helical transmembrane segment at 109–129 (AISVFSLGFLIMGTICALMAF) threads the bilayer. The Cytoplasmic portion of the chain corresponds to 130-134 (RKKRD). A helical membrane pass occupies residues 135-155 (YLLRPASMFYVFAGLCLFVSL). Residues 156-179 (EVMRQSVKRMIDSEDTVWIEYYYS) are Extracellular-facing. The chain crosses the membrane as a helical span at residues 180–204 (WSFACACAAFVLLFLGGISLLLFSL). Residues 205–222 (PRMPQNPWESCMDAEPEH) are Cytoplasmic-facing.

The protein belongs to the PMP-22/EMP/MP20 family. CACNG subfamily. In terms of assembly, component of a calcium channel complex consisting of a pore-forming alpha subunit (CACNA1S) and the ancillary subunits CACNB1 or CACNB2, CACNG1 and CACNA2D1. The channel complex contains alpha, beta, gamma and delta subunits in a 1:1:1:1 ratio, i.e. it contains either CACNB1 or CACNB2. In terms of processing, N-glycosylated. Skeletal muscle (at protein level).

The protein localises to the cell membrane. It is found in the sarcolemma. Its function is as follows. Regulatory subunit of the voltage-gated calcium channel that gives rise to L-type calcium currents in skeletal muscle. Regulates channel inactivation kinetics. The protein is Voltage-dependent calcium channel gamma-1 subunit (CACNG1) of Oryctolagus cuniculus (Rabbit).